A 459-amino-acid chain; its full sequence is MKVMKILLVLPPTESAIKRVVGTTGPPLGLAYLASMVREEHDVKIIDGLAEDLTFSDIAKIIKKFDPDIVGITATTSAMYDAYTVAKIAKNINENVFVVMGGPHVTFTPELTMRECPCIDAVVRGEGELTFKELVDALSKGRELKGILGLSYKENGKVRNEPPRPLIQNVDEIPIPSYDLLPMDKYKADGVPFGVVMTSRGCPFNCVFCSSSLQFGKRWRGHSVERVIEELSILHYEYGIKEIEFLDDTFTLNKKRAIDISLRIKQEGLDISWTASSRVNTFNEKVAKAMKEGGCHTVYFGIESASPRILEFIGKGITPQQSIDAVKTAKKFGLHALGSFIIGFPDETREEVEATIKFAKKLDIDYAQFTIATPYPGTRLWEYAIANNLLLTMNWRKYTTIDPVMKLKHFTSEQISKLLRKAYISFYLRPKVLIKDIFEHHGFIIKRAIRGLLRVYYQA.

The B12-binding domain maps to 13–145 (TESAIKRVVG…DALSKGRELK (133 aa)). The region spanning 188–402 (ADGVPFGVVM…MNWRKYTTID (215 aa)) is the Radical SAM core domain. [4Fe-4S] cluster is bound by residues cysteine 202, cysteine 206, and cysteine 209.

This sequence belongs to the methyltransferase superfamily. It depends on [4Fe-4S] cluster as a cofactor.

This is an uncharacterized protein from Pyrococcus horikoshii (strain ATCC 700860 / DSM 12428 / JCM 9974 / NBRC 100139 / OT-3).